Reading from the N-terminus, the 314-residue chain is MTASLTTKFLNNTYENPFMNASGVHCMTTQELDELANSKAGAFITKSATTLEREGNPEPRYISVPLGSINSMGLPNEGIDYYLSYVLNRQKNYPDAPAIFFSVAGMSIDENLNLLRKIQDSEFNGITELNLSCPNVPGKPQVAYDFDLTKETLEKVFAFFKKPLGVKLPPYFDFAHFDIMAKILNEFPLAYVNSINSIGNGLFIDVEKESVVVKPKNGFGGIGGEYVKPTALANVRAFYTRLRPEIKVIGTGGIKSGKDAFEHLLCGASMLQIGTELQKEGVKIFERIEKELKDIMEAKGYTSIDQFRGKLNSI.

Substrate-binding positions include Lys-46, 70–74 (NSMGL), and Asn-130. A Glycyl lysine isopeptide (Lys-Gly) (interchain with G-Cter in ubiquitin) cross-link involves residue Lys-46. 46–47 (KS) is a binding site for FMN. Position 130 (Asn-130) interacts with FMN. Cys-133 functions as the Nucleophile in the catalytic mechanism. Positions 167 and 195 each coordinate FMN. 196–197 (NS) contributes to the substrate binding site. Residues Gly-224, 252–253 (GG), and 274–275 (GT) contribute to the FMN site.

This sequence belongs to the dihydroorotate dehydrogenase family. Type 1 subfamily. In terms of assembly, homodimer. FMN serves as cofactor.

The protein localises to the cytoplasm. The enzyme catalyses (S)-dihydroorotate + fumarate = orotate + succinate. Its pathway is pyrimidine metabolism; UMP biosynthesis via de novo pathway. With respect to regulation, the activity is independent of the presence of oxygen. Functionally, catalyzes the conversion of dihydroorotate to orotate with fumarate as the electron acceptor. Molecular oxygen can replace fumarate in vitro. Does not use oxaloacetate or NAD or NADP as electron acceptors. The protein is Dihydroorotate dehydrogenase (fumarate) (URA1) of Saccharomyces cerevisiae (strain ATCC 204508 / S288c) (Baker's yeast).